We begin with the raw amino-acid sequence, 229 residues long: MSDYPSCALRLEQVARRYRSGDQELVVLDHADLELRPGEIVALVAPSGTGKSTLLHLAGLLEKPDEGRVWIGSHDAGGLSDTARTALRRDHLGFVYQFHHLLGEFSALENVVLPQMIAGRTRRQAEQHALTLLSAFGLQHRASHLPGMLSGGEQQRVAIARALANGPAVLLADEPTGNLDIHTAETVFSALLSAVRNQNVAALIATHNPDLAGRMDRQVTIREGQIVPA.

The ABC transporter domain maps to 9-229; it reads LRLEQVARRY…TIREGQIVPA (221 aa). An ATP-binding site is contributed by 45-52; it reads APSGTGKS.

This sequence belongs to the ABC transporter superfamily. Lipoprotein translocase (TC 3.A.1.125) family. As to quaternary structure, the complex is composed of two ATP-binding proteins (LolD) and two transmembrane proteins (LolC and LolE).

The protein resides in the cell inner membrane. Functionally, part of the ABC transporter complex LolCDE involved in the translocation of mature outer membrane-directed lipoproteins, from the inner membrane to the periplasmic chaperone, LolA. Responsible for the formation of the LolA-lipoprotein complex in an ATP-dependent manner. This chain is Lipoprotein-releasing system ATP-binding protein LolD, found in Granulibacter bethesdensis (strain ATCC BAA-1260 / CGDNIH1).